Here is a 55-residue protein sequence, read N- to C-terminus: Photosystem II reaction center protein K (55 aa).

A propeptide spanning residues 1 to 18 (MFNIYLENAFYLNGITFA) is cleaved from the precursor. A helical transmembrane segment spans residues 26-46 (IFDPIVDVMPIIPLFFFLLAF).

The protein belongs to the PsbK family. In terms of assembly, PSII is composed of 1 copy each of membrane proteins PsbA, PsbB, PsbC, PsbD, PsbE, PsbF, PsbH, PsbI, PsbJ, PsbK, PsbL, PsbM, PsbT, PsbX, PsbY, PsbZ, Psb30/Ycf12, at least 3 peripheral proteins of the oxygen-evolving complex and a large number of cofactors. It forms dimeric complexes.

The protein localises to the plastid. It localises to the chloroplast thylakoid membrane. Its function is as follows. One of the components of the core complex of photosystem II (PSII). PSII is a light-driven water:plastoquinone oxidoreductase that uses light energy to abstract electrons from H(2)O, generating O(2) and a proton gradient subsequently used for ATP formation. It consists of a core antenna complex that captures photons, and an electron transfer chain that converts photonic excitation into a charge separation. The chain is Photosystem II reaction center protein K from Marchantia polymorpha (Common liverwort).